A 261-amino-acid chain; its full sequence is Methylmalonyl-CoA decarboxylase (261 aa).

Residues 64 to 68, G110, T132, and K253 each bind substrate; that span reads AGHDI.

Belongs to the enoyl-CoA hydratase/isomerase family. As to quaternary structure, dimer of homotrimers.

The enzyme catalyses (R)-methylmalonyl-CoA + H(+) = propanoyl-CoA + CO2. Its function is as follows. Catalyzes the decarboxylation of (R)-methylmalonyl-CoA to propionyl-CoA. Could be part of a pathway that converts succinate to propanoate. The sequence is that of Methylmalonyl-CoA decarboxylase (scpB) from Escherichia coli (strain K12).